Here is a 387-residue protein sequence, read N- to C-terminus: Double C2-like domain-containing protein gamma (387 aa).

C2 domains are found at residues 83 to 209 and 243 to 376; these read ALGT…DICL and ERGR…ELWH. Ca(2+) is bound by residues aspartate 274, aspartate 280, aspartate 334, aspartate 336, and aspartate 342.

Ca(2+) is required as a cofactor.

In terms of biological role, may be involved in regulation of vesicular trafficking. In vitro, does not bind calcium and phospholipids. This Mus musculus (Mouse) protein is Double C2-like domain-containing protein gamma (Doc2g).